The sequence spans 521 residues: Glucose-1-phosphate adenylyltransferase large subunit 2, chloroplastic/amyloplastic (521 aa).

Residues 1 to 47 (MQFSSVLPLEGKACMSPVRRGSGGYGSERMRINCCSIRRNKALRRMC) constitute a chloroplast transit peptide.

It belongs to the bacterial/plant glucose-1-phosphate adenylyltransferase family. Heterotetramer. As to expression, abundant in the embryo and is also present in the endosperm.

The protein localises to the plastid. Its subcellular location is the chloroplast. The protein resides in the amyloplast. It carries out the reaction alpha-D-glucose 1-phosphate + ATP + H(+) = ADP-alpha-D-glucose + diphosphate. It participates in glycan biosynthesis; starch biosynthesis. With respect to regulation, activated by 3'phosphoglycerate, inhibited by orthophosphate. Allosteric regulation. Functionally, this protein plays a role in synthesis of starch. It catalyzes the synthesis of the activated glycosyl donor, ADP-glucose from Glc-1-P and ATP. In Zea mays (Maize), this protein is Glucose-1-phosphate adenylyltransferase large subunit 2, chloroplastic/amyloplastic (AGP2).